A 220-amino-acid chain; its full sequence is Germin-like protein subfamily 2 member 4 (220 aa).

The N-terminal stretch at 1-21 (MDSRCFGFFFTLLSLNVIVLA) is a signal peptide. An intrachain disulfide couples Cys31 to Cys46. Asn51 and Asn69 each carry an N-linked (GlcNAc...) asparagine glycan. A Cupin type-1 domain is found at 58 to 209 (FFAGIGKPAV…TFQIGTKEIE (152 aa)). Residues His108, His110, Glu115, and His154 each coordinate Mn(2+).

The protein belongs to the germin family. In terms of assembly, oligomer (believed to be a pentamer but probably hexamer).

The protein localises to the secreted. It is found in the extracellular space. It localises to the apoplast. Functionally, may play a role in plant defense. Probably has no oxalate oxidase activity even if the active site is conserved. In Arabidopsis thaliana (Mouse-ear cress), this protein is Germin-like protein subfamily 2 member 4 (GLP10).